The chain runs to 410 residues: uncharacterized protein (410 aa).

The segment covering 178 to 187 has biased composition (polar residues); the sequence is QKNHRNQLST. Disordered stretches follow at residues 178–203 and 236–272; these read QKNH…QEHQ and RAEQ…PTVQ. The segment covering 188 to 198 has biased composition (low complexity); it reads QKKQQQALQKA. A compositionally biased stretch (basic and acidic residues) spans 236–263; sequence RAEQAAREQEKREREALAQRQKAEEKRT.

This is an uncharacterized protein from Haemophilus influenzae (strain ATCC 51907 / DSM 11121 / KW20 / Rd).